The chain runs to 1579 residues: Pentafunctional AROM polypeptide (1579 aa).

Positions 1–391 are 3-dehydroquinate synthase; the sequence is MKVELSKVPI…YGTSAHVVSD (391 aa). Residues 44 to 46, 79 to 82, 110 to 112, and D115 contribute to the NAD(+) site; these read DTN, EAHK, and GGV. Residue R126 coordinates 7-phospho-2-dehydro-3-deoxy-D-arabino-heptonate. 135 to 136 is a binding site for NAD(+); the sequence is TS. 7-phospho-2-dehydro-3-deoxy-D-arabino-heptonate contacts are provided by D142 and K148. Residue K157 participates in NAD(+) binding. N158 is a binding site for 7-phospho-2-dehydro-3-deoxy-D-arabino-heptonate. Residues 175 to 178 and N186 each bind NAD(+); that span reads WLET. E190 contributes to the Zn(2+) binding site. 7-phospho-2-dehydro-3-deoxy-D-arabino-heptonate is bound by residues 190–193 and K257; that span reads EVIK. The active-site Proton acceptor; for 3-dehydroquinate synthase activity is E267. 7-phospho-2-dehydro-3-deoxy-D-arabino-heptonate contacts are provided by residues 271 to 275 and H278; that span reads RNLLN. Residue H278 coordinates Zn(2+). Catalysis depends on H282, which acts as the Proton acceptor; for 3-dehydroquinate synthase activity. The 7-phospho-2-dehydro-3-deoxy-D-arabino-heptonate site is built by H294 and K363. Residue H294 coordinates Zn(2+). An EPSP synthase region spans residues 404 to 862; that stretch reads VYPFKTLENG…WDVLHTQLGA (459 aa). C844 serves as the catalytic For EPSP synthase activity. Positions 881 to 1070 are shikimate kinase; the sequence is SIVIIGMRAA…IPTNRSSFVC (190 aa). Residue 886–893 coordinates ATP; the sequence is GMRAAGKT. A 3-dehydroquinase region spans residues 1071–1283; it reads LTFDDLAAHK…SAPGQLTLSQ (213 aa). The Proton acceptor; for 3-dehydroquinate dehydratase activity role is filled by H1188. K1217 serves as the catalytic Schiff-base intermediate with substrate; for 3-dehydroquinate dehydratase activity. Positions 1296-1579 are shikimate dehydrogenase; it reads AKNFYVVGSP…IYSAVTEEQA (284 aa).

In the N-terminal section; belongs to the sugar phosphate cyclases superfamily. Dehydroquinate synthase family. It in the 2nd section; belongs to the EPSP synthase family. This sequence in the 3rd section; belongs to the shikimate kinase family. The protein in the 4th section; belongs to the type-I 3-dehydroquinase family. In the C-terminal section; belongs to the shikimate dehydrogenase family. As to quaternary structure, homodimer. It depends on Zn(2+) as a cofactor.

Its subcellular location is the cytoplasm. The catalysed reaction is 7-phospho-2-dehydro-3-deoxy-D-arabino-heptonate = 3-dehydroquinate + phosphate. The enzyme catalyses 3-dehydroquinate = 3-dehydroshikimate + H2O. It carries out the reaction shikimate + NADP(+) = 3-dehydroshikimate + NADPH + H(+). It catalyses the reaction shikimate + ATP = 3-phosphoshikimate + ADP + H(+). The catalysed reaction is 3-phosphoshikimate + phosphoenolpyruvate = 5-O-(1-carboxyvinyl)-3-phosphoshikimate + phosphate. The protein operates within metabolic intermediate biosynthesis; chorismate biosynthesis; chorismate from D-erythrose 4-phosphate and phosphoenolpyruvate: step 2/7. Its pathway is metabolic intermediate biosynthesis; chorismate biosynthesis; chorismate from D-erythrose 4-phosphate and phosphoenolpyruvate: step 3/7. It functions in the pathway metabolic intermediate biosynthesis; chorismate biosynthesis; chorismate from D-erythrose 4-phosphate and phosphoenolpyruvate: step 4/7. It participates in metabolic intermediate biosynthesis; chorismate biosynthesis; chorismate from D-erythrose 4-phosphate and phosphoenolpyruvate: step 5/7. The protein operates within metabolic intermediate biosynthesis; chorismate biosynthesis; chorismate from D-erythrose 4-phosphate and phosphoenolpyruvate: step 6/7. Its function is as follows. The AROM polypeptide catalyzes 5 consecutive enzymatic reactions in prechorismate polyaromatic amino acid biosynthesis. The sequence is that of Pentafunctional AROM polypeptide from Lachancea thermotolerans (strain ATCC 56472 / CBS 6340 / NRRL Y-8284) (Yeast).